The primary structure comprises 249 residues: 1-(5-phosphoribosyl)-5-[(5-phosphoribosylamino)methylideneamino] imidazole-4-carboxamide isomerase (249 aa).

Catalysis depends on Asp-8, which acts as the Proton acceptor. Catalysis depends on Asp-131, which acts as the Proton donor.

It belongs to the HisA/HisF family.

It localises to the cytoplasm. The catalysed reaction is 1-(5-phospho-beta-D-ribosyl)-5-[(5-phospho-beta-D-ribosylamino)methylideneamino]imidazole-4-carboxamide = 5-[(5-phospho-1-deoxy-D-ribulos-1-ylimino)methylamino]-1-(5-phospho-beta-D-ribosyl)imidazole-4-carboxamide. The protein operates within amino-acid biosynthesis; L-histidine biosynthesis; L-histidine from 5-phospho-alpha-D-ribose 1-diphosphate: step 4/9. This chain is 1-(5-phosphoribosyl)-5-[(5-phosphoribosylamino)methylideneamino] imidazole-4-carboxamide isomerase, found in Nitrosomonas europaea (strain ATCC 19718 / CIP 103999 / KCTC 2705 / NBRC 14298).